A 534-amino-acid polypeptide reads, in one-letter code: Probable bifunctional tRNA threonylcarbamoyladenosine biosynthesis protein (534 aa).

The kae1 stretch occupies residues Met1–Trp324. Fe cation is bound by residues His108, His112, and Tyr129. L-threonylcarbamoyladenylate is bound by residues Tyr129–Gly133, Asp161, Gly174, Glu178, and Asn258. Asp286 is a binding site for Fe cation. A Protein kinase domain is found at Leu335–Leu534. Residues Lys340–Ile348 and Lys361 contribute to the ATP site. Asp455 acts as the Proton acceptor; for kinase activity in catalysis.

In the N-terminal section; belongs to the KAE1 / TsaD family. It in the C-terminal section; belongs to the protein kinase superfamily. Tyr protein kinase family. BUD32 subfamily. Component of the KEOPS complex that consists of Kae1, Bud32, Cgi121 and Pcc1; the whole complex dimerizes. Fe(2+) is required as a cofactor.

Its subcellular location is the cytoplasm. It carries out the reaction L-seryl-[protein] + ATP = O-phospho-L-seryl-[protein] + ADP + H(+). The enzyme catalyses L-threonyl-[protein] + ATP = O-phospho-L-threonyl-[protein] + ADP + H(+). It catalyses the reaction L-threonylcarbamoyladenylate + adenosine(37) in tRNA = N(6)-L-threonylcarbamoyladenosine(37) in tRNA + AMP + H(+). Functionally, required for the formation of a threonylcarbamoyl group on adenosine at position 37 (t(6)A37) in tRNAs that read codons beginning with adenine. Is a component of the KEOPS complex that is probably involved in the transfer of the threonylcarbamoyl moiety of threonylcarbamoyl-AMP (TC-AMP) to the N6 group of A37. The Kae1 domain likely plays a direct catalytic role in this reaction. The Bud32 domain probably displays kinase activity that regulates Kae1 function. The protein is Probable bifunctional tRNA threonylcarbamoyladenosine biosynthesis protein of Methanosphaera stadtmanae (strain ATCC 43021 / DSM 3091 / JCM 11832 / MCB-3).